The chain runs to 189 residues: ATP-dependent protease subunit HslV (189 aa).

Thr12 is an active-site residue. Residues Ser172, Cys175, and Thr178 each contribute to the Na(+) site.

The protein belongs to the peptidase T1B family. HslV subfamily. As to quaternary structure, a double ring-shaped homohexamer of HslV is capped on each side by a ring-shaped HslU homohexamer. The assembly of the HslU/HslV complex is dependent on binding of ATP.

The protein localises to the cytoplasm. It catalyses the reaction ATP-dependent cleavage of peptide bonds with broad specificity.. Its activity is regulated as follows. Allosterically activated by HslU binding. In terms of biological role, protease subunit of a proteasome-like degradation complex believed to be a general protein degrading machinery. The sequence is that of ATP-dependent protease subunit HslV from Ehrlichia chaffeensis (strain ATCC CRL-10679 / Arkansas).